The following is a 225-amino-acid chain: Cytidylate kinase (225 aa).

11 to 19 (GPAGVGKST) is a binding site for ATP.

It belongs to the cytidylate kinase family. Type 1 subfamily.

It localises to the cytoplasm. The catalysed reaction is CMP + ATP = CDP + ADP. The enzyme catalyses dCMP + ATP = dCDP + ADP. The polypeptide is Cytidylate kinase (Lawsonia intracellularis (strain PHE/MN1-00)).